The following is a 520-amino-acid chain: Sodium-dependent dicarboxylate transporter SdcS (520 aa).

Helical transmembrane passes span 30–50, 55–75, 77–97, 104–124, 160–180, 207–227, 242–262, 298–318, 323–343, 362–382, 399–419, 428–448, 452–472, and 491–511; these read TGQLIGLILGPLLFLLTLLFF, LPWKGVYVLAITLWIATWWIT, AIPIAATSLLPIVLLPLGHIL, SEYGNDIIFLFLGGFILAIAM, SMFVSNTAAVMIMIPIGLAII, IGYAGTIGGLGTLIGTPPLII, FAKWMIVGIPTVIVLLGITWL, KVVQTIFVLASLLWITREFLL, VTSSVADGTIAIFISILLFII, ELPWGVLILFGGGLALAKGIS, GVSPILIVIVITIFVLFLTEV, MILPILATLSVAVGVHPLLLM, AMAANCAYMLPVGTPPNAIIF, and LISAIIIILVVYYIMPIVLGI.

This sequence belongs to the SLC13A/DASS transporter (TC 2.A.47) family. NADC subfamily.

The protein resides in the cell membrane. Mediates the transport of the dicarboxylates fumarate, malate, and succinate across the cytoplasmic membrane via a Na(+)-electrochemical gradient. The chain is Sodium-dependent dicarboxylate transporter SdcS (sdcS) from Staphylococcus aureus (strain MRSA252).